A 341-amino-acid chain; its full sequence is S-adenosylmethionine:tRNA ribosyltransferase-isomerase (341 aa).

It belongs to the QueA family. Monomer.

The protein localises to the cytoplasm. The enzyme catalyses 7-aminomethyl-7-carbaguanosine(34) in tRNA + S-adenosyl-L-methionine = epoxyqueuosine(34) in tRNA + adenine + L-methionine + 2 H(+). It participates in tRNA modification; tRNA-queuosine biosynthesis. Functionally, transfers and isomerizes the ribose moiety from AdoMet to the 7-aminomethyl group of 7-deazaguanine (preQ1-tRNA) to give epoxyqueuosine (oQ-tRNA). The sequence is that of S-adenosylmethionine:tRNA ribosyltransferase-isomerase from Clostridium perfringens (strain ATCC 13124 / DSM 756 / JCM 1290 / NCIMB 6125 / NCTC 8237 / Type A).